A 191-amino-acid polypeptide reads, in one-letter code: Potassium-transporting ATPase KdpC subunit (191 aa).

The helical transmembrane segment at 11-31 (LFVLLTAVTGVVYPLAVTGIA) threads the bilayer.

The protein belongs to the KdpC family. In terms of assembly, the system is composed of three essential subunits: KdpA, KdpB and KdpC.

Its subcellular location is the cell inner membrane. In terms of biological role, part of the high-affinity ATP-driven potassium transport (or Kdp) system, which catalyzes the hydrolysis of ATP coupled with the electrogenic transport of potassium into the cytoplasm. This subunit acts as a catalytic chaperone that increases the ATP-binding affinity of the ATP-hydrolyzing subunit KdpB by the formation of a transient KdpB/KdpC/ATP ternary complex. This chain is Potassium-transporting ATPase KdpC subunit, found in Dechloromonas aromatica (strain RCB).